The chain runs to 328 residues: Phosphate acyltransferase (328 aa).

Belongs to the PlsX family. Homodimer. Probably interacts with PlsY.

It is found in the cytoplasm. It catalyses the reaction a fatty acyl-[ACP] + phosphate = an acyl phosphate + holo-[ACP]. It participates in lipid metabolism; phospholipid metabolism. In terms of biological role, catalyzes the reversible formation of acyl-phosphate (acyl-PO(4)) from acyl-[acyl-carrier-protein] (acyl-ACP). This enzyme utilizes acyl-ACP as fatty acyl donor, but not acyl-CoA. This is Phosphate acyltransferase from Staphylococcus aureus (strain USA300).